The sequence spans 500 residues: Archaeal-type glutamate synthase [NADPH] (500 aa).

4Fe-4S ferredoxin-type domains lie at 7 to 38 and 40 to 69; these read SKFIVDRIEDRCIKCKVCITQCSFDTHYYDED and DQIKVRNQNCVGCHRCVTFCPTNALVVRNN. 8 residues coordinate [4Fe-4S] cluster: Cys18, Cys21, Cys24, Cys28, Cys49, Cys52, Cys55, and Cys59.

This sequence belongs to the glutamate synthase family. It depends on FMN as a cofactor.

It catalyses the reaction 2 L-glutamate + NADP(+) = L-glutamine + 2-oxoglutarate + NADPH + H(+). The chain is Archaeal-type glutamate synthase [NADPH] from Dehalococcoides mccartyi (strain ATCC BAA-2266 / KCTC 15142 / 195) (Dehalococcoides ethenogenes (strain 195)).